The sequence spans 449 residues: Hyaluronidase (449 aa).

The N-terminal stretch at 1-23 (MYHLWIKCLAAWIFLKRFNGVHV) is a signal peptide. Intrachain disulfides connect Cys47–Cys340 and Cys211–Cys227. 2 N-linked (GlcNAc...) asparagine glycosylation sites follow: Asn67 and Asn103. The Proton donor role is filled by Glu135. Asn153 carries an N-linked (GlcNAc...) asparagine glycan. The N-linked (GlcNAc...) asparagine glycan is linked to Asn357. Intrachain disulfides connect Cys365–Cys376, Cys370–Cys427, and Cys429–Cys438. The N-linked (GlcNAc...) asparagine glycan is linked to Asn401. The EGF-like domain maps to 427 to 438 (CQCYQGWQGLYC).

The protein belongs to the glycosyl hydrolase 56 family. In terms of assembly, monomer. As to expression, expressed by the venom gland.

Its subcellular location is the secreted. It catalyses the reaction Random hydrolysis of (1-&gt;4)-linkages between N-acetyl-beta-D-glucosamine and D-glucuronate residues in hyaluronate.. Its function is as follows. Snake venom endo-hyaluronidase that degrades hyaluronan to smaller oligosaccharide fragments. In venom, it is not toxic by itself, but increases the diffusion of other venom proteins by degrading the extracellular matrix. In addition, it displays antiedematogenic activity. This chain is Hyaluronidase, found in Echis ocellatus (Ocellated saw-scaled viper).